The chain runs to 369 residues: Small ribosomal subunit biogenesis GTPase RsgA (369 aa).

The CP-type G domain occupies 88-246; the sequence is RTVLERPPVA…LADTPGFNQP (159 aa). GTP is bound by residues 137-140 and 188-196; these read NKQD and GPSGVGKSS. Zn(2+)-binding residues include Cys-271, Cys-276, His-278, and Cys-284. A disordered region spans residues 307–369; the sequence is QNPENSRETD…DLDNLQEDWE (63 aa). Residues 359–369 show a composition bias toward acidic residues; sequence TDLDNLQEDWE.

Belongs to the TRAFAC class YlqF/YawG GTPase family. RsgA subfamily. In terms of assembly, monomer. Associates with 30S ribosomal subunit, binds 16S rRNA. It depends on Zn(2+) as a cofactor.

The protein resides in the cytoplasm. One of several proteins that assist in the late maturation steps of the functional core of the 30S ribosomal subunit. Helps release RbfA from mature subunits. May play a role in the assembly of ribosomal proteins into the subunit. Circularly permuted GTPase that catalyzes slow GTP hydrolysis, GTPase activity is stimulated by the 30S ribosomal subunit. The sequence is that of Small ribosomal subunit biogenesis GTPase RsgA from Synechocystis sp. (strain ATCC 27184 / PCC 6803 / Kazusa).